Consider the following 198-residue polypeptide: Probable opine utilization operon repressor (198 aa).

It participates in opine metabolism; mannopine biosynthesis [regulation]. In terms of biological role, possible repressor for genes for mannityl-opine utilization and / or plasmid conjugative transfer. The sequence is that of Probable opine utilization operon repressor (opnR) from Rhizobium rhizogenes (Agrobacterium rhizogenes).